The sequence spans 724 residues: Ribosomal RNA large subunit methyltransferase K/L (724 aa).

The 112-residue stretch at 42 to 153 (DAQRLVLWSR…KGRATLSVDL (112 aa)) folds into the THUMP domain.

It belongs to the methyltransferase superfamily. RlmKL family.

It localises to the cytoplasm. The enzyme catalyses guanosine(2445) in 23S rRNA + S-adenosyl-L-methionine = N(2)-methylguanosine(2445) in 23S rRNA + S-adenosyl-L-homocysteine + H(+). The catalysed reaction is guanosine(2069) in 23S rRNA + S-adenosyl-L-methionine = N(2)-methylguanosine(2069) in 23S rRNA + S-adenosyl-L-homocysteine + H(+). In terms of biological role, specifically methylates the guanine in position 2445 (m2G2445) and the guanine in position 2069 (m7G2069) of 23S rRNA. In Xylella fastidiosa (strain M23), this protein is Ribosomal RNA large subunit methyltransferase K/L.